A 2435-amino-acid chain; its full sequence is MDSEAPTPTSSSFALPYAEPIAIVSAACRLPGHIQNPHQLWQFLQAGGIATSDVVPESRYNVAGHFDGSGRPGTLKTPGGMFIEDIDLGAFDAPFFHIGKSDAVSMDPQQRQLLEVVYECLENGGITMQGIDGDQIGCFVASYSADWHEMQSRHPASRAPGTTAGTSRAILSNRISHFFNIKGSSWTIDTACSGGLVGVDAACQYLRAGKLNGAIVAAAQLWMSPEYNEELGTMRAAASSTGRCHSFDAKADGYCRSEAVNAVYLKRLSDALRDGDPVRAVIRGTANNSDGRTPGLHSPNSDAQAAAIRAAYADAGIDSTQYTKTAFMECHATGTPAGDPSEVRGSASVLASMRPPSDPLIIGTIKSNLGHAEPGAGISGLMKAMMAVEKGIIPGNPTFITPNPNIDFAGLRVRASQRNMRWPQSTKDYRRASVASSGFGGSNAHVVLDNAEHYMQHHFLSVQPQFRTYVSSYAETGDVLSMLSGFGLGAANSSDKLAPLPNVLVFSAHDADSLKRQMGALSAHLVDPRVAIKLSDLSYTLSERRSRHFHRSFIVCRPNKGGNIETLPTDLAKYAMKPTSPVRIGFVFTGQGAQWSGMGADLIRLFPKTAKAVVDELDAALQELPADVRPSWSLLAELTEPRSSEHLREPEFSQPLVTALQLALLAVLKSWNVTADAVVGHSSGEIAAACSAGLLTPGQAILTAYFRGQAAKQVVMEGSMGMLAVGLGSAGVQKYLEDTSRAGKVVIACYNSPASVTLSGPTSLLSELAQVIQTDGHFARLLQVNLPYHSHYMSAIGDRYEKLLLDHGRLDEIQGETATRKIPMISSVSTIVLEGSKSCSAAYWKSNMVSAVQFDGACKRIVADQDLSANLLIEIGPSAALGGPIGQIIKQAGIDNVTYTSAAQRGTDSILALFGVAGQLFLHDCPVSLDHVNTDETALTEPKPAVIIDLPNYRWNHSTRYWHESLASKDWRFRNFPEHDLLGGKVLGTAWESPSWTKTLRLEDVPWLRDHKIGSEILFPASGYIAMAVEAARQATISTARSQNKAAPSAHAYHYVLRDVHFERGLVLEDETDTTLMLSLAPVARLGVKWWVFKVMSLASGGSSSSSDSWIEHSNGLVRLALNASEPLPRVTPDNYSLPLQYPTPARFWYKAFENAGYGYGPGFQKQSYIECTEGSFSARSTIMLNPPLSKWEPQPNYPLHPASMESCIQATLTSMYRGDRAGINNVLVPNAIDRIILSGDTWRSNEAVSVTTSESSSGITSKPLSNASLFDPTNGVLIIDLRGISMTSVGLQGNVCSFSTYTRVEWKPDICHLDSDTKIRRAILDLTDGTGDFVQEVLDLAAHKKPNMRVLEVDLTGGQPRSLWLSGNETSRITRAATSEFNYASDRPESVLSAQDLYSDMSSGYTSRFTLLPITSQSFVAPPELCRSDLVLIRTSQLPSMETASILTRNARCLLTEGGTIVLHVLDVSKYSKVGQESLREALSRGKFSKIRQAADGLFVAEATDADTAYSQGKSLVVLHFSTSPVFSWSSAVITSLIDKGWPITELTLEEGCRLTELPAKATILVMDEVNRPLFASMEEYQLEAIQSIVQRDCSLLWVTQGSQMHVSSPLKAICHGVFRSVRSMDPNARIVTLDVDSAAEDQLAKMADILHTVLLQVRVTPESLPADFEFVERGGLLYISRLRPAQVDNESRSDGDKDGLQPVPVDLHSTESTIGLVSGRPGILDTLHFAELGPGRLLVLGPEDIEVEIFAASVDDGDYALAKNLDPEDSTRLGYGGAGIVTRTGDSITDIRAGQRVALFHGGCVANRIVVARQVVFSVPDTMTFEDAATLPTAFVPAIYSIYHLAQLRQGQRVLIHSAANAVGIACVQLCQGLSCKPYVTVDSDEERKFLAEEVGVSSDHILLLNSENFAREMQDSAQNHGFDVIINTSQHHLPDQGWGVVSPGGVHVALGQTINDRSLLPMDYFTNNRSFCSLDIRTLPLDKLASPRACSQLSDLIYGSSIKHMLPKAVFPCHGVQAALQSCHDHNRLRNVVISTGPDKDVRILVKPEKQQPRCTFAPEQTYLLVGKLKGVSGSLALHLARCGAKYLVIMSPKNSENSENISRSIRAMGCSLRFFEGDAASIDDMRRCYGQISGPIGGIVHGAAAQSFRLMSHETYQATLARSVLSAWNLHTVSLERDDSVPFFIMLSSTAGVVGDEKQPHHAGSDVFHNALATYRCGLGLPSTSINLGPINDDALLPDSEKTFKTLSSGVWFGVNEAVFRRIIDHSLSREHHGAQRHFELASQAQIITGIAVPQPGSSDILHDVRLLGLKLAQSGNSSSAASGRDDSQNREMQTFLLCARSTNPDPAVLLSSAVGVLQAQFTKMLRLNELMDPAYPLNTYGMDSLAAAEPRSWVRTAFGVQLTTLDVVNAASLVVLCQKIISRMGLGKEV.

A Ketosynthase family 3 (KS3) domain is found at 18-450 (AEPIAIVSAA…GSNAHVVLDN (433 aa)). Catalysis depends on for beta-ketoacyl synthase activity residues Cys-192, His-331, and His-371. The segment at 586–883 (FVFTGQGAQW…EIGPSAALGG (298 aa)) is malonyl-CoA:ACP transacylase (MAT) domain. Residue Ser-682 is the For malonyltransferase activity of the active site. Residues 979–1125 (HDLLGGKVLG…GLVRLALNAS (147 aa)) form an N-terminal hotdog fold region. Residues 979–1291 (HDLLGGKVLG…LRGISMTSVG (313 aa)) form a dehydratase (DH) domain region. The PKS/mFAS DH domain maps to 979-1296 (HDLLGGKVLG…MTSVGLQGNV (318 aa)). The active-site For beta-hydroxyacyl dehydratase activity is the His-1011. A C-terminal hotdog fold region spans residues 1141–1296 (QYPTPARFWY…MTSVGLQGNV (156 aa)). The enoylreductase (ER) domain stretch occupies residues 1724-2037 (GILDTLHFAE…DHNRLRNVVI (314 aa)). Residues 2062–2301 (PEQTYLLVGK…ITGIAVPQPG (240 aa)) form a catalytic ketoreductase (KRc) domain region. The Carrier domain maps to 2353 to 2429 (VLLSSAVGVL…VLCQKIISRM (77 aa)). The residue at position 2389 (Ser-2389) is an O-(pantetheine 4'-phosphoryl)serine.

It functions in the pathway mycotoxin biosynthesis. Functionally, highly reducing polyketide synthase; part of the core atranone cluster (CAC) which products are predicted to catalyze most or all steps of mycotoxin atranone synthesis, starting from geranylgeranyl pyrophosphate (GGPP). The initial cyclization of GGPP to dolabellane is probably performed by the terpene cyclase ATR13. The Baeyer-Villiger oxidation near the end of the atranone synthesis, which converts atranones D and E to atranones F and G is predicted to be catalyzed by the monooxygenase ATR8. Of the CAC's other predicted gene products, the reducing PKS ATR6 might synthesize a polyketide chain. This polyketide is probably transferred onto the atranone backbone by the polyketide transferase ATR5. Other predicted CAC products include 4 oxygenases (ATR2, ATR3, ATR4, and ATR14), 3 short-chain reductases (ATR7, ATR9, and ATR10), and a methyltransferase (ATR12). These may all be involved in the various steps of atranone biosynthesis, although their specific roles must await experimental determination. The protein is Highly reducing polyketide synthase ATR6 of Stachybotrys chlorohalonatus (strain IBT 40285).